The sequence spans 105 residues: Circadian clock oscillator protein KaiB1 (105 aa).

This sequence belongs to the KaiB family. As to quaternary structure, homotetramer in solution and crystals formed by 2 dimers. Only elutes as a homotetramer in size exclusion chromatography, interacts with KaiC1 and KaiC3. The KaiABC complex composition changes during the circadian cycle to control KaiC phosphorylation. Complexes KaiC(6), KaiA(2-4):KaiC(6), KaiB(6):KaiC(6) and KaiC(6):KaiB(6):KaiA(12) are among the most important forms, many form cooperatively. Undergoes a major conformational rearrangment; in the free state forms homotetramers as a dimer of dimers. When bound to the CI domain of KaiC switches to a monomeric thioredoxin-fold (KaiB(fs)). KaiB(fs) binds CikA, leading it to dephosphorylate phospho-RpaA.

Its function is as follows. Key component of the KaiABC oscillator complex, which constitutes the main circadian regulator in cyanobacteria. Complex composition changes during the circadian cycle to control KaiC phosphorylation. KaiA stimulates KaiC autophosphorylation, while KaiB sequesters KaiA, leading to KaiC autodephosphorylation. Phospho-Ser-431 KaiC accumulation triggers binding of KaiB to form the KaiB(6):KaiC(6) complex, leading to changes in output regulators CikA and SasA. KaiB switches to a thioredoxin-like fold (KaiB(fs)) when bound to KaiC. KaiB(6):KaiC(6) formation exposes a site for KaiA binding that sequesters KaiA from KaiC, making the KaiC(6):KaiB(6):KaiA(12) complex that results in KaiC autodephosphorylation. In terms of biological role, component of the oscillator and circadian clock in this organism, enhances fitness in a rhythmic environment. The homotetramer reduces the ATPase activity of KaiC3 by 35%. A metamorphic protein which reversibly switches between an inactive tetrameric fold and a rare, thioredoxin-like monomeric fold (KaiB(fs)). KaiB(fs) binds phospho-KaiC, KaiA and CikA. KaiA and CikA compete for binding to KaiB(fs), and KaiB(fs) and SasA compete for binding to KaiC, thus the clock oscillator and output signal pathway are tightly coupled. The sequence is that of Circadian clock oscillator protein KaiB1 from Synechocystis sp. (strain ATCC 27184 / PCC 6803 / Kazusa).